The chain runs to 897 residues: 3'-5' exonuclease DinG (897 aa).

The 154-residue stretch at 8-161 folds into the Exonuclease domain; it reads VVDLETTGNQ…DEDAATTAKL (154 aa). Residues 241 to 496 form the Helicase ATP-binding domain; it reads SKAVDQLGLT…KAIDQLEKQR (256 aa). Position 276 to 283 (276 to 283) interacts with ATP; that stretch reads ASLGSGKS. Residues 448–451 carry the DEAH box motif; that stretch reads DEAH. The 191-residue stretch at 703-893 folds into the Helicase C-terminal domain; sequence NIDEYVASIV…QFGKLLRQIQ (191 aa).

The protein belongs to the helicase family. DinG subfamily. Type 2 sub-subfamily. In terms of assembly, monomer in solution.

The nuclease activity is inhibited by ATP or ADP. In terms of biological role, 3'-5' exonuclease acting on single-stranded DNA (ssDNA) and RNA (ssRNA) substrates. Displays ssDNA-stimulated ATPase activity, but lacks helicase activity. The chain is 3'-5' exonuclease DinG from Staphylococcus aureus (strain MRSA252).